The sequence spans 121 residues: Small ribosomal subunit protein uS13 (121 aa).

The disordered stretch occupies residues 93–121; the sequence is RGLPMRGQRTRTNARTRKGPRKGAAALKK.

This sequence belongs to the universal ribosomal protein uS13 family. In terms of assembly, part of the 30S ribosomal subunit. Forms a loose heterodimer with protein S19. Forms two bridges to the 50S subunit in the 70S ribosome.

In terms of biological role, located at the top of the head of the 30S subunit, it contacts several helices of the 16S rRNA. In the 70S ribosome it contacts the 23S rRNA (bridge B1a) and protein L5 of the 50S subunit (bridge B1b), connecting the 2 subunits; these bridges are implicated in subunit movement. Contacts the tRNAs in the A and P-sites. This chain is Small ribosomal subunit protein uS13, found in Acidovorax ebreus (strain TPSY) (Diaphorobacter sp. (strain TPSY)).